Reading from the N-terminus, the 93-residue chain is MQAGGGGDAGDTRGRHRIQAELKKLEQEARFLEEELEELDKTDKVSAALQELMVTAESKADPLLPVTTGPACQSWDRWFEGPQDLRRCKCWFL.

A coiled-coil region spans residues 12 to 52; that stretch reads TRGRHRIQAELKKLEQEARFLEEELEELDKTDKVSAALQEL. In terms of domain architecture, G protein gamma spans 20–93; the sequence is AELKKLEQEA…DLRRCKCWFL (74 aa). Cys-88 is lipidated: S-palmitoyl cysteine. Cys-90 is modified (cysteine methyl ester). Cys-90 carries S-farnesyl cysteine lipidation. Residues 91–93 constitute a propeptide, removed in mature form; it reads WFL.

In terms of assembly, g proteins are composed of 3 units, alpha, beta and gamma. Interacts with the beta subunit RGB1.

The protein localises to the cell membrane. Its function is as follows. Guanine nucleotide-binding proteins (G proteins) are involved as modulators or transducers in various transmembrane signaling systems. The protein is Guanine nucleotide-binding protein subunit gamma 1 of Oryza sativa subsp. indica (Rice).